A 476-amino-acid polypeptide reads, in one-letter code: Siroheme synthase (476 aa).

The precorrin-2 dehydrogenase /sirohydrochlorin ferrochelatase stretch occupies residues methionine 1–leucine 207. NAD(+) contacts are provided by residues lysine 25 to valine 26 and proline 46 to serine 47. Serine 132 carries the post-translational modification Phosphoserine. The uroporphyrinogen-III C-methyltransferase stretch occupies residues glycine 220–leucine 476. Residue aspartate 252 is the Proton acceptor of the active site. The active-site Proton donor is the lysine 274. S-adenosyl-L-methionine contacts are provided by residues glycine 305–aspartate 307, valine 310, threonine 335–alanine 336, methionine 387, and glycine 416.

In the N-terminal section; belongs to the precorrin-2 dehydrogenase / sirohydrochlorin ferrochelatase family. This sequence in the C-terminal section; belongs to the precorrin methyltransferase family.

It catalyses the reaction uroporphyrinogen III + 2 S-adenosyl-L-methionine = precorrin-2 + 2 S-adenosyl-L-homocysteine + H(+). It carries out the reaction precorrin-2 + NAD(+) = sirohydrochlorin + NADH + 2 H(+). The enzyme catalyses siroheme + 2 H(+) = sirohydrochlorin + Fe(2+). It functions in the pathway cofactor biosynthesis; adenosylcobalamin biosynthesis; precorrin-2 from uroporphyrinogen III: step 1/1. It participates in cofactor biosynthesis; adenosylcobalamin biosynthesis; sirohydrochlorin from precorrin-2: step 1/1. Its pathway is porphyrin-containing compound metabolism; siroheme biosynthesis; precorrin-2 from uroporphyrinogen III: step 1/1. The protein operates within porphyrin-containing compound metabolism; siroheme biosynthesis; siroheme from sirohydrochlorin: step 1/1. It functions in the pathway porphyrin-containing compound metabolism; siroheme biosynthesis; sirohydrochlorin from precorrin-2: step 1/1. Multifunctional enzyme that catalyzes the SAM-dependent methylations of uroporphyrinogen III at position C-2 and C-7 to form precorrin-2 via precorrin-1. Then it catalyzes the NAD-dependent ring dehydrogenation of precorrin-2 to yield sirohydrochlorin. Finally, it catalyzes the ferrochelation of sirohydrochlorin to yield siroheme. The protein is Siroheme synthase of Xylella fastidiosa (strain 9a5c).